The primary structure comprises 296 residues: Light-independent protochlorophyllide reductase iron-sulfur ATP-binding protein (296 aa).

ATP-binding positions include 10 to 15 (GIGKST) and K39. Position 14 (S14) interacts with Mg(2+). The [4Fe-4S] cluster site is built by C95 and C129. 180 to 181 (NR) is a binding site for ATP.

This sequence belongs to the NifH/BchL/ChlL family. In terms of assembly, homodimer. Protochlorophyllide reductase is composed of three subunits; ChlL, ChlN and ChlB. The cofactor is [4Fe-4S] cluster.

The protein localises to the plastid. Its subcellular location is the chloroplast. The enzyme catalyses chlorophyllide a + oxidized 2[4Fe-4S]-[ferredoxin] + 2 ADP + 2 phosphate = protochlorophyllide a + reduced 2[4Fe-4S]-[ferredoxin] + 2 ATP + 2 H2O. It functions in the pathway porphyrin-containing compound metabolism; chlorophyll biosynthesis (light-independent). Component of the dark-operative protochlorophyllide reductase (DPOR) that uses Mg-ATP and reduced ferredoxin to reduce ring D of protochlorophyllide (Pchlide) to form chlorophyllide a (Chlide). This reaction is light-independent. The L component serves as a unique electron donor to the NB-component of the complex, and binds Mg-ATP. This Mesostigma viride (Green alga) protein is Light-independent protochlorophyllide reductase iron-sulfur ATP-binding protein.